A 330-amino-acid chain; its full sequence is Molybdate/tungstate import ATP-binding protein WtpC (330 aa).

Residues 3–232 (LMVEGISKDY…PASEEVAKFL (230 aa)) enclose the ABC transporter domain. 34-41 (GPSGAGKT) contacts ATP.

This sequence belongs to the ABC transporter superfamily. Sulfate/tungstate importer (TC 3.A.1.6) family. As to quaternary structure, the complex is composed of two ATP-binding proteins (WtpC), two transmembrane proteins (WtpB) and a solute-binding protein (WtpA).

The protein localises to the cell membrane. The catalysed reaction is tungstate(in) + ATP + H2O = tungstate(out) + ADP + phosphate + H(+). Part of the ABC transporter complex WtpABC involved in molybdate/tungstate import. Responsible for energy coupling to the transport system. This chain is Molybdate/tungstate import ATP-binding protein WtpC (wtpC), found in Thermococcus kodakarensis (strain ATCC BAA-918 / JCM 12380 / KOD1) (Pyrococcus kodakaraensis (strain KOD1)).